A 171-amino-acid polypeptide reads, in one-letter code: Antimicrobial protein CAP18 (171 aa).

A signal peptide spans 1–29; that stretch reads METHKHGPSLAWWSLLLLLLGLLMPPAIA. Disulfide bonds link Cys-85–Cys-96 and Cys-107–Cys-124.

Belongs to the cathelicidin family. Neutrophils.

It is found in the secreted. CAP18 binds to the lipid A moiety of bacterial lipopolysaccharides (LPS), a glycolipid present in the outer membrane of all Gram-negative bacteria. Has antibiotic activity. The polypeptide is Antimicrobial protein CAP18 (CAP18) (Oryctolagus cuniculus (Rabbit)).